We begin with the raw amino-acid sequence, 449 residues long: 3-phosphoshikimate 1-carboxyvinyltransferase (449 aa).

The tract at residues 1-29 is disordered; the sequence is MSHDSVPSPITARAGTPLRGRLRPPGDKS. 3 residues coordinate 3-phosphoshikimate: lysine 28, serine 29, and arginine 33. Lysine 28 is a binding site for phosphoenolpyruvate. Glycine 101 and arginine 129 together coordinate phosphoenolpyruvate. 3-phosphoshikimate contacts are provided by serine 175, glutamine 177, aspartate 330, and lysine 357. Residue glutamine 177 coordinates phosphoenolpyruvate. Catalysis depends on aspartate 330, which acts as the Proton acceptor. Residues arginine 361 and arginine 405 each contribute to the phosphoenolpyruvate site.

The protein belongs to the EPSP synthase family. As to quaternary structure, monomer.

It is found in the cytoplasm. It catalyses the reaction 3-phosphoshikimate + phosphoenolpyruvate = 5-O-(1-carboxyvinyl)-3-phosphoshikimate + phosphate. It functions in the pathway metabolic intermediate biosynthesis; chorismate biosynthesis; chorismate from D-erythrose 4-phosphate and phosphoenolpyruvate: step 6/7. Catalyzes the transfer of the enolpyruvyl moiety of phosphoenolpyruvate (PEP) to the 5-hydroxyl of shikimate-3-phosphate (S3P) to produce enolpyruvyl shikimate-3-phosphate and inorganic phosphate. This Methylobacterium sp. (strain 4-46) protein is 3-phosphoshikimate 1-carboxyvinyltransferase.